We begin with the raw amino-acid sequence, 357 residues long: Histidinol-phosphate aminotransferase 1 (357 aa).

Position 217 is an N6-(pyridoxal phosphate)lysine (lysine 217).

This sequence belongs to the class-II pyridoxal-phosphate-dependent aminotransferase family. Histidinol-phosphate aminotransferase subfamily. In terms of assembly, homodimer. It depends on pyridoxal 5'-phosphate as a cofactor.

The catalysed reaction is L-histidinol phosphate + 2-oxoglutarate = 3-(imidazol-4-yl)-2-oxopropyl phosphate + L-glutamate. The protein operates within amino-acid biosynthesis; L-histidine biosynthesis; L-histidine from 5-phospho-alpha-D-ribose 1-diphosphate: step 7/9. The polypeptide is Histidinol-phosphate aminotransferase 1 (Burkholderia lata (strain ATCC 17760 / DSM 23089 / LMG 22485 / NCIMB 9086 / R18194 / 383)).